We begin with the raw amino-acid sequence, 227 residues long: Claudin-15 (227 aa).

Met1 is a topological domain (cytoplasmic). A helical membrane pass occupies residues 2 to 24; that stretch reads SIAVETFGFFMSALGLLMLGVTL. Topologically, residues 25–74 are extracellular; that stretch reads PNSYWRVSTVHGNVITTNTIFENLWYSCATDSLGVSNCWDFPSMLALSGY. Residues Cys52 and Cys62 are joined by a disulfide bond. Residues 75-99 form a helical membrane-spanning segment; the sequence is VQGCRALMITAILLGFLGLFLGMVG. Residues 100–115 lie on the Cytoplasmic side of the membrane; it reads LRCTNVGNIDLSRKAK. Position 111 is a phosphoserine (Ser111). Residues 116 to 140 traverse the membrane as a helical segment; it reads LLAIAGAFHILAGACGMVAISWYAV. Residues 141-159 lie on the Extracellular side of the membrane; sequence NITTDFFNPLYVGTKYELG. The interval 146–147 is important for the formation of tight-junction strand-like structures; the sequence is FF. Residues 160-182 traverse the membrane as a helical segment; sequence SALYLGWSASLLSILGGICVFST. Residues 183–227 are Cytoplasmic-facing; the sequence is CCCDSKEDPATRVGLPYKPSTVVTARATSDESDVSFGKYGKNAYV. Phosphoserine occurs at positions 211, 214, and 217.

It belongs to the claudin family. In terms of assembly, can form homo- and heteropolymeric tight junction strands. Palmitoylated. In terms of tissue distribution, detected in kidney, jejunum and colon (at protein level).

The protein resides in the cell junction. Its subcellular location is the tight junction. It is found in the cell membrane. The enzyme catalyses Na(+)(in) = Na(+)(out). It carries out the reaction K(+)(in) = K(+)(out). The catalysed reaction is Cs(+)(in) = Cs(+)(out). It catalyses the reaction Rb(+)(in) = Rb(+)(out). The enzyme catalyses Li(+)(in) = Li(+)(out). It carries out the reaction NH4(+)(in) = NH4(+)(out). The catalysed reaction is methylamine(out) = methylamine(in). It catalyses the reaction H2O(in) = H2O(out). In terms of biological role, forms paracellular channels: polymerizes in tight junction strands with cation- and water-selective channels through the strands, conveying epithelial permeability in a process known as paracellular tight junction permeability. In intestinal epithelium, allows for sodium and water fluxes from the peritoneal side to the lumen of the intestine to regulate nutrient absorption and intestinal morphogenesis. The sequence is that of Claudin-15 from Rattus norvegicus (Rat).